The primary structure comprises 490 residues: MELLGSTLTATYAHPPPASASFLPAIGTITSSYKDRFPHRNLTHSLSLPWRPNTYYKTAYNYPTLAPYSSRSQRVCESTMLPFVSNRTTFFTRYTPDDWYRSNLVSFQESNSSRHNSERLRVDTSRLIQDKYQQIRKTQAHSTQNLGERVNDLAFWKSEITHELDEMIGETNALTDIKRRLERGLIETEGPLQVSRECLFHREKRMGIDLVHDEAEKELLAEVDTILCCQERMRQHLDKANAQLASDRSAQHELEKDLSDKQAALRIDDKCQHLRNTSEGVSYFRGVERVDATVSVPETWAKFTDDNVLRSQSERAASAKLREETENLLIVTANEMWNQFNKVNLAFTNRIAETVDAKNKIHTHLTKTLQEIFQIEMTIESIKKAIKEKSAFLKVAQTRLDERTRRPNVELCRDMAQLRLVNEVYEVDETIQTLQQRLRDSEDTLQSLAHTKATLEHDLAVKANTLYIDQEKCMSMRNSYPSTLRLVGYC.

O-linked (GalNAc...) threonine glycans are attached at residues threonine 7, threonine 9, and threonine 11. N-linked (GlcNAc...) asparagine glycosylation is found at asparagine 41, asparagine 86, asparagine 111, and asparagine 276. Residues 415-461 (MAQLRLVNEVYEVDETIQTLQQRLRDSEDTLQSLAHTKATLEHDLAV) are a coiled coil.

It belongs to the tektin family. As to quaternary structure, microtubule inner protein component of sperm flagellar doublet microtubules. Interacts with TEKT1, TEKT2, TEKT4 and TEKT5. Interacts with CCDC38. In terms of processing, N- and O-glycosylated. Post-translationally, ubiquitinated, leading to its degradation. Deubiquitinated by USP16, promoting its stability. May be proteolytically processed during the epididymal transit of spermatozoa. In terms of tissue distribution, expressed preferentially in testis. Expressed predominantly in late pachytene spermatocytes and early round spermatids. Expressed in spermatozoa.

It is found in the cytoplasm. It localises to the cytoskeleton. Its subcellular location is the cilium axoneme. The protein resides in the flagellum axoneme. The protein localises to the cytoplasmic vesicle. It is found in the secretory vesicle. It localises to the acrosome outer membrane. Its function is as follows. Microtubule inner protein (MIP) part of the dynein-decorated doublet microtubules (DMTs) in cilia and flagellar axoneme. Forms filamentous polymers in the walls of ciliary and flagellar microtubules. Required for normal sperm mobility. In Mus musculus (Mouse), this protein is Tektin-3 (Tekt3).